A 283-amino-acid polypeptide reads, in one-letter code: Rhomboid-like protease 2 (283 aa).

Over residues 1–11 (MANIRTLSDYA) the composition is skewed to polar residues. The disordered stretch occupies residues 1–26 (MANIRTLSDYASSPPRGSSALEGEVG). Helical transmembrane passes span 62–82 (IIII…AGLA), 114–134 (ICPL…WVQI), and 149–169 (LLAV…AVLF). Ser178 serves as the catalytic Nucleophile. 4 helical membrane passes run 179 to 199 (TAVF…WHAI), 205 to 225 (AIIS…GSHM), 227 to 247 (SVGH…LNEN), and 260 to 280 (LTSQ…IFLV). His230 is a catalytic residue.

Belongs to the peptidase S54 family.

Its subcellular location is the membrane. The enzyme catalyses Cleaves type-1 transmembrane domains using a catalytic dyad composed of serine and histidine that are contributed by different transmembrane domains.. Serine protease involved in intramembrane proteolysis and the subsequent release of polypeptides from their membrane anchors. The polypeptide is Rhomboid-like protease 2 (ROM2) (Toxoplasma gondii).